The chain runs to 198 residues: ATP-dependent Clp protease proteolytic subunit (198 aa).

Ser-103 serves as the catalytic Nucleophile. The active site involves His-128.

It belongs to the peptidase S14 family. As to quaternary structure, fourteen ClpP subunits assemble into 2 heptameric rings which stack back to back to give a disk-like structure with a central cavity, resembling the structure of eukaryotic proteasomes.

It localises to the cytoplasm. It carries out the reaction Hydrolysis of proteins to small peptides in the presence of ATP and magnesium. alpha-casein is the usual test substrate. In the absence of ATP, only oligopeptides shorter than five residues are hydrolyzed (such as succinyl-Leu-Tyr-|-NHMec, and Leu-Tyr-Leu-|-Tyr-Trp, in which cleavage of the -Tyr-|-Leu- and -Tyr-|-Trp bonds also occurs).. Functionally, cleaves peptides in various proteins in a process that requires ATP hydrolysis. Has a chymotrypsin-like activity. Plays a major role in the degradation of misfolded proteins. The chain is ATP-dependent Clp protease proteolytic subunit from Ruthia magnifica subsp. Calyptogena magnifica.